Reading from the N-terminus, the 210-residue chain is MAIQKILFASLLICSLIQSIHGAEKVRLFKELDKGALDVTTKPSREGPGVVLDAGKDTLNITWTLSSIGSKREAEFKIIKVKLCYAPPSQVDRPWRKTHDELFKDKTCPHKIIAKPYDKTLQSTTWTLERDIPTGTYFVRAYAVDAIGHEVAYGQSTDDAKKTNLFSVQAISGRHASLDIASICFSVFSVVALVVFFVNEKRKAKIEQSK.

Positions 1–22 (MAIQKILFASLLICSLIQSIHG) are cleaved as a signal peptide. Residues 178–198 (LDIASICFSVFSVVALVVFFV) traverse the membrane as a helical segment.

This sequence belongs to the NAR2 family. As to quaternary structure, heterotetramer composed of two NRT2.1 and two NRT3.1. Interacts with NRT2.1 and NRT2.3. Interacts with all other NRT2 transporters, including NRT2.5. As to expression, highly expressed in roots. Detected in shoots.

It is found in the cell membrane. Its function is as follows. Acts as a dual component transporter with NTR2.1. Required for high-affinity nitrate transport. Acts as a repressor of lateral root initiation. May be involved in targeting NRT2 proteins to the plasma membrane. The protein is High-affinity nitrate transporter 3.1 (NRT3.1) of Arabidopsis thaliana (Mouse-ear cress).